Consider the following 160-residue polypeptide: Cytochrome b6-f complex subunit 4 (160 aa).

Helical transmembrane passes span 36–56 (LLYI…GLAV), 95–115 (LLGV…PFLE), and 131–151 (TVFL…ALPI).

Belongs to the cytochrome b family. PetD subfamily. As to quaternary structure, the 4 large subunits of the cytochrome b6-f complex are cytochrome b6, subunit IV (17 kDa polypeptide, petD), cytochrome f and the Rieske protein, while the 4 small subunits are petG, petL, petM and petN. The complex functions as a dimer.

The protein resides in the plastid. It localises to the chloroplast thylakoid membrane. Its function is as follows. Component of the cytochrome b6-f complex, which mediates electron transfer between photosystem II (PSII) and photosystem I (PSI), cyclic electron flow around PSI, and state transitions. The polypeptide is Cytochrome b6-f complex subunit 4 (Psilotum nudum (Whisk fern)).